Here is a 760-residue protein sequence, read N- to C-terminus: Protein HEADING DATE 3B (760 aa).

Gly residues-rich tracts occupy residues 1–12 and 60–70; these read MATRGGGGGGGG and SGGGGGGGVGG. 4 disordered regions span residues 1–120, 144–169, 236–262, and 285–346; these read MATR…KINK, SRST…RLAD, VKSR…EKSS, and TGII…IEET. Positions 71–87 are enriched in low complexity; the sequence is SPAHSTSAASQSQSQSQ. Polar residues predominate over residues 94 to 107; sequence SLFQPFNVPSNRPG. Residues 108–120 are compositionally biased toward basic and acidic residues; the sequence is HSTEKINSDKINK. Residues 236-248 show a composition bias toward basic and acidic residues; that stretch reads VKSRTPLKDKEME. The Nuclear localization signal signature appears at 349-355; it reads KRKRLLE. 2 disordered regions span residues 485 to 543 and 707 to 760; these read LQQP…GVQL and FPTV…QRDD. Polar residues-rich tracts occupy residues 511–522, 531–543, and 707–730; these read QRDQAATNGVSK, ASDN…GVQL, and FPTV…QTNV.

As to expression, expressed in mesophyll cells of young leaves, anthers, stigmas and the top of lemmas.

Its subcellular location is the nucleus. Involved in the regulation of flowering time under short day (SD) and long day (LD) conditions. Functions as a floral promoter by negatively regulating GHD7, a repressor of the photoperiodic control of flowering. Acts as a floral activator in the LD photoperiodic pathway. Involved in blue light-induced activation of EHD1 expression to promote flowering under SD conditions. In Oryza sativa subsp. japonica (Rice), this protein is Protein HEADING DATE 3B (HD3B).